A 238-amino-acid polypeptide reads, in one-letter code: Carboxymethylenebutenolidase (238 aa).

Active-site residues include C123, D171, and H201.

Belongs to the dienelactone hydrolase family. In terms of assembly, monomer.

The catalysed reaction is 2-(5-oxo-2,5-dihydrofuran-2-ylidene)acetate + H2O = 4-oxohex-2-enedioate + H(+). It participates in aromatic compound metabolism; 3-chlorocatechol degradation. Functionally, ring cleavage of cyclic ester dienelactone to produce maleylacetate. The protein is Carboxymethylenebutenolidase (tcbE) of Pseudomonas sp. (strain P51).